A 279-amino-acid chain; its full sequence is MEPIIELEKINYKYQPDDLRPALKDVSFTIDKGEWIAIIGHNGSGKSTLAKTINGLLLPESGIVKVGNQILDEENIWTIRQMVGMVFQNPDNQFVGSTVEDDVAFGLENQGIPREEMLVRVKDALEKVRMAEFASREPARLSGGQKQRVAIAGVVALRPDIIILDEATSMLDPEGREEVISTIKKIKEESQLTVISITHDIDEAANANRILVMRQGELVREGTPKEIFSAGPELIDLGLDLPFPEKLKSALKERGVDVPSEYMTEERMVDWLWTSVLNK.

In terms of domain architecture, ABC transporter spans Ile5–Asp240. Gly40 to Ser47 lines the ATP pocket.

It belongs to the ABC transporter superfamily. Energy-coupling factor EcfA family. Forms a stable energy-coupling factor (ECF) transporter complex composed of 2 membrane-embedded substrate-binding proteins (S component), 2 ATP-binding proteins (A component) and 2 transmembrane proteins (T component).

It localises to the cell membrane. Functionally, ATP-binding (A) component of a common energy-coupling factor (ECF) ABC-transporter complex. Unlike classic ABC transporters this ECF transporter provides the energy necessary to transport a number of different substrates. This chain is Energy-coupling factor transporter ATP-binding protein EcfA, found in Enterococcus faecium (Streptococcus faecium).